The chain runs to 449 residues: Phosphoglucosamine mutase (449 aa).

S100 functions as the Phosphoserine intermediate in the catalytic mechanism. Positions 100, 241, 243, and 245 each coordinate Mg(2+). S100 bears the Phosphoserine mark.

The protein belongs to the phosphohexose mutase family. Mg(2+) is required as a cofactor. In terms of processing, activated by phosphorylation.

It catalyses the reaction alpha-D-glucosamine 1-phosphate = D-glucosamine 6-phosphate. Its function is as follows. Catalyzes the conversion of glucosamine-6-phosphate to glucosamine-1-phosphate. The chain is Phosphoglucosamine mutase from Clostridium kluyveri (strain NBRC 12016).